Consider the following 282-residue polypeptide: Pantothenate synthetase (282 aa).

28–35 serves as a coordination point for ATP; that stretch reads MGALHSGH. His35 acts as the Proton donor in catalysis. Position 59 (Gln59) interacts with (R)-pantoate. Gln59 contacts beta-alanine. 146–149 lines the ATP pocket; that stretch reads GEKD. Gln152 serves as a coordination point for (R)-pantoate. ATP contacts are provided by residues Val175 and 183 to 186; that span reads LSSR.

It belongs to the pantothenate synthetase family. Homodimer.

Its subcellular location is the cytoplasm. The enzyme catalyses (R)-pantoate + beta-alanine + ATP = (R)-pantothenate + AMP + diphosphate + H(+). Its pathway is cofactor biosynthesis; (R)-pantothenate biosynthesis; (R)-pantothenate from (R)-pantoate and beta-alanine: step 1/1. Its function is as follows. Catalyzes the condensation of pantoate with beta-alanine in an ATP-dependent reaction via a pantoyl-adenylate intermediate. The protein is Pantothenate synthetase of Salinispora arenicola (strain CNS-205).